A 103-amino-acid polypeptide reads, in one-letter code: Large ribosomal subunit protein bL21 (103 aa).

The protein belongs to the bacterial ribosomal protein bL21 family. In terms of assembly, part of the 50S ribosomal subunit. Contacts protein L20.

Functionally, this protein binds to 23S rRNA in the presence of protein L20. This chain is Large ribosomal subunit protein bL21, found in Acidithiobacillus ferrooxidans (strain ATCC 23270 / DSM 14882 / CIP 104768 / NCIMB 8455) (Ferrobacillus ferrooxidans (strain ATCC 23270)).